A 388-amino-acid polypeptide reads, in one-letter code: Alanine racemase (388 aa).

The active-site Proton acceptor; specific for D-alanine is K44. Position 44 is an N6-(pyridoxal phosphate)lysine (K44). R142 provides a ligand contact to substrate. Y273 functions as the Proton acceptor; specific for L-alanine in the catalytic mechanism. M321 is a binding site for substrate.

It belongs to the alanine racemase family. Pyridoxal 5'-phosphate is required as a cofactor.

The catalysed reaction is L-alanine = D-alanine. Its pathway is amino-acid biosynthesis; D-alanine biosynthesis; D-alanine from L-alanine: step 1/1. Catalyzes the interconversion of L-alanine and D-alanine. May also act on other amino acids. This Mycobacterium ulcerans (strain Agy99) protein is Alanine racemase (alr).